The primary structure comprises 515 residues: Maturase K (515 aa).

The protein belongs to the intron maturase 2 family. MatK subfamily.

Its subcellular location is the plastid. It is found in the chloroplast. Functionally, usually encoded in the trnK tRNA gene intron. Probably assists in splicing its own and other chloroplast group II introns. This chain is Maturase K, found in Cedrus deodara (Deodar cedar).